The sequence spans 225 residues: MTTAAIIVAAGRGTRAGGDLPKQWQPLAGRPVLAHTLAAFRAAAGVSRTLLVIHPDDRARAEALPGVAEGKVELVEGGASRDASVRNALEALAGAGIERVLIHDGARPLVAPELIARTLAALETAPGAAPAVPVSDALWRGEGGRVVGTQDRTGLFRAQTPQAFRYEAILAAHRAHPGGAADDVEVARAAGLEVAIVEGCEDNLKVTYPGDFARAERLLALAAGL.

The protein belongs to the IspD/TarI cytidylyltransferase family. IspD subfamily.

The catalysed reaction is 2-C-methyl-D-erythritol 4-phosphate + CTP + H(+) = 4-CDP-2-C-methyl-D-erythritol + diphosphate. The protein operates within isoprenoid biosynthesis; isopentenyl diphosphate biosynthesis via DXP pathway; isopentenyl diphosphate from 1-deoxy-D-xylulose 5-phosphate: step 2/6. In terms of biological role, catalyzes the formation of 4-diphosphocytidyl-2-C-methyl-D-erythritol from CTP and 2-C-methyl-D-erythritol 4-phosphate (MEP). The polypeptide is 2-C-methyl-D-erythritol 4-phosphate cytidylyltransferase (Cereibacter sphaeroides (strain ATCC 17023 / DSM 158 / JCM 6121 / CCUG 31486 / LMG 2827 / NBRC 12203 / NCIMB 8253 / ATH 2.4.1.) (Rhodobacter sphaeroides)).